The chain runs to 1043 residues: Calcium-transporting ATPase 1, plasma membrane-type (1043 aa).

Residues 1-178 are Cytoplasmic-facing; sequence MSFIRKKSME…FLWDASQDMT (178 aa). 2 consecutive transmembrane segments (helical) span residues 179–199 and 202–222; these read LLLL…TEGW and GMYD…ITAA. Over 223-258 the chain is Cytoplasmic; the sequence is SDYKQSLQFRDLDKEKKKIDVQVTRDGYRQKVSIYD. Helical transmembrane passes span 259-279 and 356-376; these read IVVG…DGLF and VATI…TVLM. The Cytoplasmic segment spans residues 377–395; that stretch reads ARFLLGKAGAPGGLLRWRM. The helical transmembrane segment at 396-416 threads the bilayer; the sequence is VDALAVLNFFAVAVTIIVVAV. The 4-aspartylphosphate intermediate role is filled by Asp460. The Mg(2+) site is built by Asp761 and Asp765. The helical transmembrane segment at 824–844 threads the bilayer; sequence LTVNVVALMVNFISASFTGSA. Position 845 (Pro845) is a topological domain, cytoplasmic. 2 consecutive transmembrane segments (helical) span residues 846 to 866 and 891 to 911; these read LTIV…ALAL and VMWR…GVLL. At 912-955 the chain is on the cytoplasmic side; the sequence is LRGKSLLQINGPQADSLLNTFVFNTFVFCQVFNEVNSREMEKIN. The next 2 membrane-spanning stretches (helical) occupy residues 956 to 976 and 998 to 1018; these read VFSG…TAGF and WLTS…LKCI. Residues 1019–1043 are Cytoplasmic-facing; the sequence is PVESGSDASDRHDGYRPIPTGPSAV. Positions 1023-1043 are disordered; the sequence is GSDASDRHDGYRPIPTGPSAV.

This sequence belongs to the cation transport ATPase (P-type) (TC 3.A.3) family. Type IIB subfamily.

The protein localises to the membrane. It carries out the reaction Ca(2+)(in) + ATP + H2O = Ca(2+)(out) + ADP + phosphate + H(+). Activated by calmodulin. In terms of biological role, this magnesium-dependent enzyme catalyzes the hydrolysis of ATP coupled with the translocation of calcium from the cytosol out of the cell, into the endoplasmic reticulum, or into organelles. The protein is Calcium-transporting ATPase 1, plasma membrane-type of Oryza sativa subsp. japonica (Rice).